A 53-amino-acid polypeptide reads, in one-letter code: uncharacterized protein (53 aa).

This is an uncharacterized protein from Haemophilus influenzae (strain ATCC 51907 / DSM 11121 / KW20 / Rd).